Consider the following 773-residue polypeptide: Jhy protein homolog (773 aa).

Disordered stretches follow at residues 1 to 247 (MSHS…SKQY), 325 to 373 (WSQY…KSLV), 496 to 526 (KKHPSGSQKGSQSVSNINRQASTEKKKQPKL), 596 to 615 (ESESQLSSERSQRNQVKISR), and 713 to 743 (AKTIPKPKPSNLSDQASKEKKTPTHAGKEDT). The segment covering 10-28 (VSIQSPVHHTNIKVQSTEP) has biased composition (polar residues). Positions 29-43 (SFKKEDLHLISKDSL) are enriched in basic and acidic residues. The segment covering 48–57 (ESPTQKIKSQ) has biased composition (polar residues). The segment covering 59-84 (DLEDQIQDNDMEPDSLEEENLSETEE) has biased composition (acidic residues). Positions 112–134 (PTEDKYSHIRYDPNWKSKKEEGK) are enriched in basic and acidic residues. Over residues 145–154 (VDSSTENLTL) the composition is skewed to polar residues. The segment covering 216 to 229 (SNLSRYLKSSSSRS) has biased composition (low complexity). Residues 334–351 (SSGPRGQSSETTNGQQPS) show a composition bias toward polar residues. The segment covering 353 to 369 (KPAKHKIRKQRRHRHGP) has biased composition (basic residues). Over residues 500–516 (SGSQKGSQSVSNINRQA) the composition is skewed to polar residues. Residues 598 to 610 (ESQLSSERSQRNQ) are compositionally biased toward low complexity. Residues 728–743 (ASKEKKTPTHAGKEDT) are compositionally biased toward basic and acidic residues.

In terms of biological role, required for the normal development of cilia in brain ependymal cells lining the ventricular surfaces. The polypeptide is Jhy protein homolog (JHY) (Bos taurus (Bovine)).